We begin with the raw amino-acid sequence, 547 residues long: Chaperonin GroEL 1 (547 aa).

Residues threonine 30–proline 33, lysine 51, aspartate 87–threonine 91, glycine 415, and aspartate 496 each bind ATP. A disordered region spans residues lysine 525 to methionine 547. Over residues glycine 533–methionine 547 the composition is skewed to gly residues.

The protein belongs to the chaperonin (HSP60) family. As to quaternary structure, forms a cylinder of 14 subunits composed of two heptameric rings stacked back-to-back. Interacts with the co-chaperonin GroES.

Its subcellular location is the cytoplasm. It carries out the reaction ATP + H2O + a folded polypeptide = ADP + phosphate + an unfolded polypeptide.. Its function is as follows. Together with its co-chaperonin GroES, plays an essential role in assisting protein folding. The GroEL-GroES system forms a nano-cage that allows encapsulation of the non-native substrate proteins and provides a physical environment optimized to promote and accelerate protein folding. This chain is Chaperonin GroEL 1, found in Cereibacter sphaeroides (strain ATCC 17023 / DSM 158 / JCM 6121 / CCUG 31486 / LMG 2827 / NBRC 12203 / NCIMB 8253 / ATH 2.4.1.) (Rhodobacter sphaeroides).